A 115-amino-acid polypeptide reads, in one-letter code: MNAFLLSALCLLGAWAALAGGVTVQDGNFSFSLESVKKLKDLQEPQEPRVGKLRNFAPIPGEPVVPILCSNPNFPEELKPLCKEPNAQEILQRLEEIAEDPGTCEICAYAACTGC.

Residues 1-21 form the signal peptide; the sequence is MNAFLLSALCLLGAWAALAGG. 3 cysteine pairs are disulfide-bonded: cysteine 69–cysteine 82, cysteine 104–cysteine 112, and cysteine 107–cysteine 115.

This sequence belongs to the guanylin family. As to expression, highly expressed in ileum and colon. Found in plasma.

It localises to the secreted. In terms of biological role, endogenous activator of intestinal guanylate cyclase. It stimulates this enzyme through the same receptor binding region as the heat-stable enterotoxins. The chain is Guanylin (GUCA2A) from Homo sapiens (Human).